A 255-amino-acid polypeptide reads, in one-letter code: Staphylococcal secretory antigen ssaA1 (255 aa).

The first 26 residues, Met-1–Ala-26, serve as a signal peptide directing secretion. A run of 3 repeats spans residues Tyr-75 to Tyr-78, Tyr-88 to Tyr-91, and Tyr-98 to Tyr-101. Residues Tyr-75–Tyr-101 are 3 X 4 AA repeats of Y-N-N-Y. The region spanning Ala-134–His-255 is the Peptidase C51 domain.

It localises to the secreted. Functionally, not known; immunogenic protein. This is Staphylococcal secretory antigen ssaA1 (ssaA1) from Staphylococcus aureus (strain MW2).